Here is a 110-residue protein sequence, read N- to C-terminus: uncharacterized protein (110 aa).

The N-terminal stretch at 1–16 is a signal peptide; it reads MKKILLIASMTAGLTA. A lipid anchor (N-palmitoyl cysteine) is attached at Cys-17. A lipid anchor (S-diacylglycerol cysteine) is attached at Cys-17.

It localises to the cell membrane. This is an uncharacterized protein from Salmonella typhimurium (strain LT2 / SGSC1412 / ATCC 700720).